Here is a 189-residue protein sequence, read N- to C-terminus: GTP cyclohydrolase 1 (189 aa).

The Zn(2+) site is built by cysteine 79, histidine 82, and cysteine 151.

The protein belongs to the GTP cyclohydrolase I family. In terms of assembly, toroid-shaped homodecamer, composed of two pentamers of five dimers.

It catalyses the reaction GTP + H2O = 7,8-dihydroneopterin 3'-triphosphate + formate + H(+). Its pathway is cofactor biosynthesis; 7,8-dihydroneopterin triphosphate biosynthesis; 7,8-dihydroneopterin triphosphate from GTP: step 1/1. The chain is GTP cyclohydrolase 1 from Lactiplantibacillus plantarum (strain ATCC BAA-793 / NCIMB 8826 / WCFS1) (Lactobacillus plantarum).